Here is a 366-residue protein sequence, read N- to C-terminus: 3-dehydroquinate synthase (366 aa).

NAD(+) contacts are provided by residues 75–80 (DGEEYK), 109–113 (GVVGD), 133–134 (TT), K146, K155, and 173–176 (TLDT). Residues E188, H251, and H268 each coordinate Zn(2+).

It belongs to the sugar phosphate cyclases superfamily. Dehydroquinate synthase family. It depends on Co(2+) as a cofactor. Requires Zn(2+) as cofactor. The cofactor is NAD(+).

The protein resides in the cytoplasm. The enzyme catalyses 7-phospho-2-dehydro-3-deoxy-D-arabino-heptonate = 3-dehydroquinate + phosphate. It functions in the pathway metabolic intermediate biosynthesis; chorismate biosynthesis; chorismate from D-erythrose 4-phosphate and phosphoenolpyruvate: step 2/7. In terms of biological role, catalyzes the conversion of 3-deoxy-D-arabino-heptulosonate 7-phosphate (DAHP) to dehydroquinate (DHQ). This chain is 3-dehydroquinate synthase, found in Nitrosospira multiformis (strain ATCC 25196 / NCIMB 11849 / C 71).